We begin with the raw amino-acid sequence, 215 residues long: Urease accessory protein UreG (215 aa).

Residue 24 to 31 (GPVGSGKT) participates in GTP binding.

This sequence belongs to the SIMIBI class G3E GTPase family. UreG subfamily. As to quaternary structure, homodimer. UreD, UreF and UreG form a complex that acts as a GTP-hydrolysis-dependent molecular chaperone, activating the urease apoprotein by helping to assemble the nickel containing metallocenter of UreC. The UreE protein probably delivers the nickel.

The protein localises to the cytoplasm. In terms of biological role, facilitates the functional incorporation of the urease nickel metallocenter. This process requires GTP hydrolysis, probably effectuated by UreG. This chain is Urease accessory protein UreG, found in Burkholderia ambifaria (strain ATCC BAA-244 / DSM 16087 / CCUG 44356 / LMG 19182 / AMMD) (Burkholderia cepacia (strain AMMD)).